Here is a 278-residue protein sequence, read N- to C-terminus: MSKEVSEEGRHGKDYVDPPPAPLLDMAELKLWSFYRAIIAEFIATLLFLYVTVATVIGHKNQTGPCGGVGLLGIAWAFGGMIFVLVYCTAGISGGHINPAVTFGLFLARKVSLPRAVAYMVAQCLGAICGVGLVKAFMMTPYKRLGGGANTVADGYSTGTALGAEIIGTFVLVYTVFSATDPKRSARDSHVPVLAPLPIGFAVFMVHLATIPITGTGINPARSFGAAVIYNNEKAWDDHWIFWVGPFVGALAAAAYHQYILRAAAIKALASFRSNPTN.

Met1 is subject to N-acetylmethionine. At 1–36 (MSKEVSEEGRHGKDYVDPPPAPLLDMAELKLWSFYR) the chain is on the cytoplasmic side. An N6,N6-dimethyllysine modification is found at Lys3. The chain crosses the membrane as a helical span at residues 37 to 57 (AIIAEFIATLLFLYVTVATVI). The Extracellular segment spans residues 58-74 (GHKNQTGPCGGVGLLGI). Residues 75–95 (AWAFGGMIFVLVYCTAGISGG) form a helical membrane-spanning segment. Residues 96–116 (HINPAVTFGLFLARKVSLPRA) lie on the Cytoplasmic side of the membrane. An NPA 1 motif is present at residues 98–100 (NPA). A helical membrane pass occupies residues 117 to 137 (VAYMVAQCLGAICGVGLVKAF). Residues 138–158 (MMTPYKRLGGGANTVADGYST) lie on the Extracellular side of the membrane. Residues 159-179 (GTALGAEIIGTFVLVYTVFSA) traverse the membrane as a helical segment. Over 180–192 (TDPKRSARDSHVP) the chain is Cytoplasmic. Residues 193 to 213 (VLAPLPIGFAVFMVHLATIPI) form a helical membrane-spanning segment. The Extracellular segment spans residues 214 to 240 (TGTGINPARSFGAAVIYNNEKAWDDHW). Residues 219–221 (NPA) carry the NPA 2 motif. The chain crosses the membrane as a helical span at residues 241–261 (IFWVGPFVGALAAAAYHQYIL). Residues 262 to 278 (RAAAIKALASFRSNPTN) lie on the Cytoplasmic side of the membrane. Phosphoserine occurs at positions 271 and 274.

This sequence belongs to the MIP/aquaporin (TC 1.A.8) family. PIP (TC 1.A.8.11) subfamily. As to expression, expressed in roots and floral buds.

It localises to the cell membrane. In terms of biological role, aquaporins facilitate the transport of water and small neutral solutes across cell membranes. In Arabidopsis thaliana (Mouse-ear cress), this protein is Probable aquaporin PIP2-8 (PIP2-8).